The chain runs to 491 residues: Protein translocase subunit SecY (491 aa).

Topologically, residues 1–20 are cytoplasmic; the sequence is MGWKEAAAPVLTRMPAVERP. Residues 21–47 form a helical membrane-spanning segment; the sequence is EGHVPFRRKMYWTGGVLVLYFFLTNVP. Residues 48–58 are Extracellular-facing; that stretch reads LWGIQTAGNDF. Positions 59–66 form an intramembrane region, helical; sequence FGQFRSLL. Residues 59 to 87 form a discontinuously helical membrane-spanning segment; it reads FGQFRSLLAGGQGTVLQLGIGPIVTASIV. The stretch at 67–78 is an intramembrane region; sequence AGGQGTVLQLGI. An intramembrane region (helical) is located at residues 79–87; sequence GPIVTASIV. Topologically, residues 88–109 are cytoplasmic; sequence LQLLGGANLLGLDTDNDPRDQA. A helical transmembrane segment spans residues 110–134; it reads IYQGLQKFLVGVMVVLTGAPMVFLG. At 135 to 152 the chain is on the extracellular side; that stretch reads NFLQPSQQLAQSMPGGAF. Residues 153-177 traverse the membrane as a helical segment; it reads GVEVLIFAQIAAGGILLLFMDEVIS. The Cytoplasmic segment spans residues 178-183; it reads KWGVGS. The chain crosses the membrane as a helical span at residues 184–202; the sequence is GIGLFIVAGVSQSLVGGLV. Residues 203-244 lie on the Extracellular side of the membrane; sequence FWEGGVGSQGLLPTWFDIIVGNVSNMPPLLSGSGIEFLLMQA. The chain crosses the membrane as a helical span at residues 245–266; the sequence is GILGLLTTLFIYVVVVYAESVR. Residues 267–291 are Cytoplasmic-facing; the sequence is VEIPLSHARVKGARGRFPVKLIYAS. A helical membrane pass occupies residues 292 to 313; it reads VLPMILVRALQANIQFLGQILN. Residues 314–365 are Extracellular-facing; the sequence is STLASMPTWLGVYGGNGQVTGGLFYYLAPIYSPNAWMWWTSGATAARWQVLI. Residues 366 to 385 form a helical membrane-spanning segment; the sequence is RIAIDLSFMIIGGAIFAIFW. Residues 386 to 428 are Cytoplasmic-facing; sequence VETADMGPDATARQIQNSGMQIPGFRKNQGVIEKVMERYIPQV. The helical transmembrane segment at 429–447 threads the bilayer; sequence TVIGGALVGLLAVMANMLG. The Extracellular portion of the chain corresponds to 448–452; sequence TIGNV. The helical transmembrane segment at 453–467 threads the bilayer; sequence SGTGLLLTISITYKL. Residues 468 to 491 lie on the Cytoplasmic side of the membrane; the sequence is YEEIAEEQMMEMHPMMREMFGGGD.

This sequence belongs to the SecY/SEC61-alpha family. Component of the Sec protein translocase complex. Heterotrimer consisting of alpha (SecY), beta (SecG) and gamma (SecE) subunits. The heterotrimers can form oligomers, although 1 heterotrimer is thought to be able to translocate proteins. Interacts with the ribosome. May interact with SecDF, and other proteins may be involved.

The protein resides in the cell membrane. Functionally, the central subunit of the protein translocation channel SecYEG. Consists of two halves formed by TMs 1-5 and 6-10. These two domains form a lateral gate at the front which open onto the bilayer between TMs 2 and 7, and are clamped together by SecE at the back. The channel is closed by both a pore ring composed of hydrophobic SecY resides and a short helix (helix 2A) on the extracellular side of the membrane which forms a plug. The plug probably moves laterally to allow the channel to open. The ring and the pore may move independently. In Halobacterium salinarum (strain ATCC 700922 / JCM 11081 / NRC-1) (Halobacterium halobium), this protein is Protein translocase subunit SecY.